We begin with the raw amino-acid sequence, 344 residues long: Oxygen sensor histidine kinase NreB (344 aa).

4 residues coordinate [4Fe-4S] cluster: cysteine 58, cysteine 61, cysteine 73, and cysteine 76. In terms of domain architecture, Histidine kinase spans 147 to 344 (ENERKRISRE…GTIITLDIPI (198 aa)). Histidine 158 is subject to Phosphohistidine; by autocatalysis.

[4Fe-4S] cluster is required as a cofactor. Autophosphorylated.

The protein resides in the cytoplasm. The enzyme catalyses ATP + protein L-histidine = ADP + protein N-phospho-L-histidine.. Its function is as follows. Member of the two-component regulatory system NreB/NreC involved in the control of dissimilatory nitrate/nitrite reduction in response to oxygen. NreB functions as a direct oxygen sensor histidine kinase which is autophosphorylated, in the absence of oxygen, probably at the conserved histidine residue, and transfers its phosphate group probably to a conserved aspartate residue of NreC. NreB/NreC activates the expression of the nitrate (narGHJI) and nitrite (nir) reductase operons, as well as the putative nitrate transporter gene narT. The sequence is that of Oxygen sensor histidine kinase NreB (nreB) from Staphylococcus epidermidis (strain ATCC 12228 / FDA PCI 1200).